We begin with the raw amino-acid sequence, 320 residues long: Phosphatidylserine decarboxylase proenzyme (320 aa).

Active-site charge relay system; for autoendoproteolytic cleavage activity residues include aspartate 90, histidine 147, and serine 254. Catalysis depends on serine 254, which acts as the Schiff-base intermediate with substrate; via pyruvic acid; for decarboxylase activity. Residue serine 254 is modified to Pyruvic acid (Ser); by autocatalysis. The disordered stretch occupies residues 290–320 (TAAAEPAPLPEEEIRAEHRASPLVDDKQDQG). A compositionally biased stretch (basic and acidic residues) spans 301–320 (EEIRAEHRASPLVDDKQDQG).

It belongs to the phosphatidylserine decarboxylase family. PSD-B subfamily. Prokaryotic type I sub-subfamily. In terms of assembly, heterodimer of a large membrane-associated beta subunit and a small pyruvoyl-containing alpha subunit. Requires pyruvate as cofactor. Is synthesized initially as an inactive proenzyme. Formation of the active enzyme involves a self-maturation process in which the active site pyruvoyl group is generated from an internal serine residue via an autocatalytic post-translational modification. Two non-identical subunits are generated from the proenzyme in this reaction, and the pyruvate is formed at the N-terminus of the alpha chain, which is derived from the carboxyl end of the proenzyme. The autoendoproteolytic cleavage occurs by a canonical serine protease mechanism, in which the side chain hydroxyl group of the serine supplies its oxygen atom to form the C-terminus of the beta chain, while the remainder of the serine residue undergoes an oxidative deamination to produce ammonia and the pyruvoyl prosthetic group on the alpha chain. During this reaction, the Ser that is part of the protease active site of the proenzyme becomes the pyruvoyl prosthetic group, which constitutes an essential element of the active site of the mature decarboxylase.

It is found in the cell membrane. It carries out the reaction a 1,2-diacyl-sn-glycero-3-phospho-L-serine + H(+) = a 1,2-diacyl-sn-glycero-3-phosphoethanolamine + CO2. Its pathway is phospholipid metabolism; phosphatidylethanolamine biosynthesis; phosphatidylethanolamine from CDP-diacylglycerol: step 2/2. In terms of biological role, catalyzes the formation of phosphatidylethanolamine (PtdEtn) from phosphatidylserine (PtdSer). The sequence is that of Phosphatidylserine decarboxylase proenzyme from Klebsiella pneumoniae subsp. pneumoniae (strain ATCC 700721 / MGH 78578).